Reading from the N-terminus, the 184-residue chain is Probable S-adenosyl-L-methionine-binding protein PYRAB06630 (184 aa).

The TsaA-like domain occupies 9-140 (YRPIGIIHSP…YVPEFDVREN (132 aa)). S-adenosyl-L-methionine-binding positions include 26–28 (PIQ), 65–66 (HR), Arg89, and 120–123 (LDGT).

It belongs to the tRNA methyltransferase O family.

The polypeptide is Probable S-adenosyl-L-methionine-binding protein PYRAB06630 (Pyrococcus abyssi (strain GE5 / Orsay)).